The following is a 408-amino-acid chain: 8-amino-7-oxononanoate synthase (408 aa).

R20 provides a ligand contact to substrate. 119–120 (GY) is a pyridoxal 5'-phosphate binding site. H144 provides a ligand contact to substrate. Pyridoxal 5'-phosphate is bound by residues S190, H218, and T246. K249 is subject to N6-(pyridoxal phosphate)lysine. T372 serves as a coordination point for substrate.

The protein belongs to the class-II pyridoxal-phosphate-dependent aminotransferase family. BioF subfamily. In terms of assembly, homodimer. It depends on pyridoxal 5'-phosphate as a cofactor.

The enzyme catalyses 6-carboxyhexanoyl-[ACP] + L-alanine + H(+) = (8S)-8-amino-7-oxononanoate + holo-[ACP] + CO2. It functions in the pathway cofactor biosynthesis; biotin biosynthesis. Catalyzes the decarboxylative condensation of pimeloyl-[acyl-carrier protein] and L-alanine to produce 8-amino-7-oxononanoate (AON), [acyl-carrier protein], and carbon dioxide. The sequence is that of 8-amino-7-oxononanoate synthase from Leptothrix cholodnii (strain ATCC 51168 / LMG 8142 / SP-6) (Leptothrix discophora (strain SP-6)).